Reading from the N-terminus, the 251-residue chain is Protein phosphatase 1 regulatory subunit 35 (251 aa).

Disordered regions lie at residues 58–99 (LITV…QQTH) and 180–235 (PALA…VPRP). Over residues 76-99 (PNKDEHGVETDREQSRECDGQQTH) the composition is skewed to basic and acidic residues.

This sequence belongs to the PPP1R35 family.

The protein localises to the cytoplasm. It is found in the cytoskeleton. The protein resides in the microtubule organizing center. It localises to the centrosome. Its subcellular location is the centriole. In terms of biological role, during centriole duplication, may play a role in the centriole elongation by promoting the recruitment of the microtubule-binding elongation machinery, leading to the centriole to centrosome conversion. In addition may play a role in the primary cilia assembly. This chain is Protein phosphatase 1 regulatory subunit 35, found in Danio rerio (Zebrafish).